Consider the following 111-residue polypeptide: Large ribosomal subunit protein uL24 (111 aa).

The protein belongs to the universal ribosomal protein uL24 family. Part of the 50S ribosomal subunit.

Functionally, one of two assembly initiator proteins, it binds directly to the 5'-end of the 23S rRNA, where it nucleates assembly of the 50S subunit. Its function is as follows. One of the proteins that surrounds the polypeptide exit tunnel on the outside of the subunit. This chain is Large ribosomal subunit protein uL24, found in Chlamydia muridarum (strain MoPn / Nigg).